The sequence spans 80 residues: Tripartite terminase subunit 2 (80 aa).

This sequence belongs to the herpesviridae TRM2 protein family. As to quaternary structure, associates with TRM1 and TRM3 to form the tripartite terminase complex.

The protein localises to the host nucleus. Functionally, component of the molecular motor that translocates viral genomic DNA in empty capsid during DNA packaging. Forms a tripartite terminase complex together with TRM1 and TRM3 in the host cytoplasm. Once the complex reaches the host nucleus, it interacts with the capsid portal vertex. This portal forms a ring in which genomic DNA is translocated into the capsid. This Homo sapiens (Human) protein is Tripartite terminase subunit 2.